Here is a 345-residue protein sequence, read N- to C-terminus: N(4)-(Beta-N-acetylglucosaminyl)-L-asparaginase (345 aa).

The first 23 residues, 1 to 23 (MARKWNLPFLLLPLVLGIPLVRG), serve as a signal peptide directing secretion. Residue Asn-38 is glycosylated (N-linked (GlcNAc...) asparagine). Cys-64 and Cys-69 are joined by a disulfide. N-linked (GlcNAc...) asparagine glycosylation occurs at Asn-149. The cysteines at positions 163 and 179 are disulfide-linked. The Nucleophile role is filled by Thr-205. Residues 233–236 (RVGD) and 256–259 (TGDG) contribute to the substrate site. Cysteines 285 and 305 form a disulfide. N-linked (GlcNAc...) asparagine glycosylation occurs at Asn-307. A disulfide bridge links Cys-316 with Cys-344.

It belongs to the Ntn-hydrolase family. As to quaternary structure, heterotetramer of two alpha and two beta chains arranged as a dimer of alpha/beta heterodimers. Post-translationally, N-glycosylated. In terms of processing, cleaved into an alpha and beta chain by autocatalysis; this activates the enzyme. The N-terminal residue of the beta subunit is responsible for the nucleophile hydrolase activity.

It is found in the lysosome. The enzyme catalyses N(4)-(beta-N-acetyl-D-glucosaminyl)-L-asparagine + H2O = N-acetyl-beta-D-glucosaminylamine + L-aspartate + H(+). In terms of biological role, cleaves the GlcNAc-Asn bond which joins oligosaccharides to the peptide of asparagine-linked glycoproteins. The sequence is that of N(4)-(Beta-N-acetylglucosaminyl)-L-asparaginase (Aga) from Rattus norvegicus (Rat).